The primary structure comprises 75 residues: Nigwaprin-a (75 aa).

The signal sequence occupies residues 1–24; sequence MSSGGLLLLLGLLTLWAELTPVSG. A WAP domain is found at 27–72; it reads RPVKPGLCPPRPQKPPCVKECKNDWSCRGEQKCCRYGCIYECRDPI. 4 disulfide bridges follow: C34–C60, C43–C64, C47–C59, and C53–C68.

It belongs to the venom waprin family. Expressed by the venom gland.

The protein resides in the secreted. Damages membranes of susceptible bacteria. Has no hemolytic activity. Not toxic to mice. Does not inhibit the proteinases elastase and cathepsin G. The polypeptide is Nigwaprin-a (Cryptophis nigrescens (Eastern small-eyed snake)).